A 304-amino-acid chain; its full sequence is Methionyl-tRNA formyltransferase (304 aa).

Residue 107 to 110 coordinates (6S)-5,6,7,8-tetrahydrofolate; it reads SLLP.

It belongs to the Fmt family.

The enzyme catalyses L-methionyl-tRNA(fMet) + (6R)-10-formyltetrahydrofolate = N-formyl-L-methionyl-tRNA(fMet) + (6S)-5,6,7,8-tetrahydrofolate + H(+). Functionally, attaches a formyl group to the free amino group of methionyl-tRNA(fMet). The formyl group appears to play a dual role in the initiator identity of N-formylmethionyl-tRNA by promoting its recognition by IF2 and preventing the misappropriation of this tRNA by the elongation apparatus. The chain is Methionyl-tRNA formyltransferase from Coprothermobacter proteolyticus (strain ATCC 35245 / DSM 5265 / OCM 4 / BT).